The primary structure comprises 202 residues: Protein FAR-RED ELONGATED HYPOCOTYL 1 (202 aa).

Serine 39 bears the Phosphoserine mark. Residues lysine 40 to lysine 43 carry the Nuclear localization sequence (NLS) motif. A Nuclear export sequence (NES) motif is present at residues leucine 54–leucine 57. Threonine 61 is modified (phosphothreonine).

This sequence belongs to the FHY1 protein family. In terms of assembly, homodimer and heterodimer with FHL. Interacts with underphosphorylated PHYA, especially upon far-red (FR) light illumination. Binds to LAF1 and HFR1. Forms PHYA/FHY1/HFR1 complex in darkness but dissociates from PHYA and HFR1 in response to continuous FR light (FRc). In terms of processing, inactivated by rapid reversible PHYA-mediated phosphorylation at Ser-39 and Thr-61 in red light (R), thus inhibiting PHYA signaling in a negative feedback loop; this ensures the seedling deetiolation process in response to a R-enriched light condition. Subsequent exposure to far-red light (FR) after the R conditions leads to dephosphorylation. The phosphorylated form is cytoplasmic only and unable to bind to chromatin at direct target genes whereas the unphosphorylated form can shuttle from cytoplasm to nucleus. In terms of tissue distribution, expressed in hypocotyl cells of etiolated plants.

It localises to the nucleus. Its subcellular location is the cytoplasm. Functionally, key regulator of far red / red (FR/R) spectrum-specific responses essential for the adaption to changing light conditions (e.g. de-etiolation), essentially by regulating PHYA shuttling from the cytoplasm to the nucleus and by directly regulating the expression of some target genes, depending on light conditions and phosphorylation status. Binds chromatin at target genes promoters, especially in FR light conditions. Can activate transcription of different genes, some being in a phytochrome A (PHYA)-dependent and other in a PHYA-independent manners. Controls specific aspects of plant development, such as the inhibition of seed germination under FR during salt stress. Essential for light-regulated PHYA nuclear accumulation and subsequent PHYA phototropic signaling processes involved in photomorphogenesis. Mediates the association of PHYA with HFR1 and LAF1 in the nucleus in response to FR conditions. PHYA-specific signal transducer in response to continuous FR lights. Contributes to inhibition of hypocotyl elongation in continuous blue light (B). The sequence is that of Protein FAR-RED ELONGATED HYPOCOTYL 1 from Arabidopsis thaliana (Mouse-ear cress).